Consider the following 671-residue polypeptide: UvrABC system protein B (671 aa).

The Helicase ATP-binding domain occupies Glu-25 to Arg-412. An ATP-binding site is contributed by Gly-38 to Thr-45. The short motif at Tyr-91–Ile-114 is the Beta-hairpin element. Residues Gln-429–Ile-582 form the Helicase C-terminal domain. Residues Thr-632–Arg-667 form the UVR domain.

It belongs to the UvrB family. In terms of assembly, forms a heterotetramer with UvrA during the search for lesions. Interacts with UvrC in an incision complex.

The protein resides in the cytoplasm. Its function is as follows. The UvrABC repair system catalyzes the recognition and processing of DNA lesions. A damage recognition complex composed of 2 UvrA and 2 UvrB subunits scans DNA for abnormalities. Upon binding of the UvrA(2)B(2) complex to a putative damaged site, the DNA wraps around one UvrB monomer. DNA wrap is dependent on ATP binding by UvrB and probably causes local melting of the DNA helix, facilitating insertion of UvrB beta-hairpin between the DNA strands. Then UvrB probes one DNA strand for the presence of a lesion. If a lesion is found the UvrA subunits dissociate and the UvrB-DNA preincision complex is formed. This complex is subsequently bound by UvrC and the second UvrB is released. If no lesion is found, the DNA wraps around the other UvrB subunit that will check the other stand for damage. In Pseudomonas putida (strain ATCC 47054 / DSM 6125 / CFBP 8728 / NCIMB 11950 / KT2440), this protein is UvrABC system protein B.